The following is a 469-amino-acid chain: Uridine kinase-like protein 4 (469 aa).

The tract at residues 46-249 is uridine kinase; sequence QRQPFVIGVA…IVQHICTKLG (204 aa). The uracil phosphoribosyltransferase stretch occupies residues 259–469; it reads NLYVIHSTFQ…GDRYFGTDDD (211 aa). GTP is bound by residues K283, R292, and 326 to 329; that span reads CKRL. 5-phospho-alpha-D-ribose 1-diphosphate-binding residues include R336 and R361. Residue R381 coordinates GTP. Residues D387, 392–395, and E458 each bind 5-phospho-alpha-D-ribose 1-diphosphate; that span reads TGNS. 457-459 is a binding site for uracil; that stretch reads GEF.

The protein in the N-terminal section; belongs to the uridine kinase family. In the C-terminal section; belongs to the UPRTase family. Mg(2+) serves as cofactor.

It catalyses the reaction UMP + diphosphate = 5-phospho-alpha-D-ribose 1-diphosphate + uracil. The enzyme catalyses cytidine + ATP = CMP + ADP + H(+). It carries out the reaction uridine + ATP = UMP + ADP + H(+). It functions in the pathway pyrimidine metabolism; UMP biosynthesis via salvage pathway; UMP from uracil: step 1/1. It participates in pyrimidine metabolism; CTP biosynthesis via salvage pathway; CTP from cytidine: step 1/3. The protein operates within pyrimidine metabolism; UMP biosynthesis via salvage pathway; UMP from uridine: step 1/1. With respect to regulation, allosterically activated by GTP. Its function is as follows. Involved in the pyrimidine salvage pathway. The uracil phosphoribosyltransferase (UPRT) activity, that catalyzes the conversion of uracil and 5-phospho-alpha-D-ribose 1-diphosphate (PRPP) to UMP and diphosphate, is unsure. In Arabidopsis thaliana (Mouse-ear cress), this protein is Uridine kinase-like protein 4 (UKL4).